A 280-amino-acid chain; its full sequence is ATP synthase gamma chain (280 aa).

It belongs to the ATPase gamma chain family. In terms of assembly, F-type ATPases have 2 components, CF(1) - the catalytic core - and CF(0) - the membrane proton channel. CF(1) has five subunits: alpha(3), beta(3), gamma(1), delta(1), epsilon(1). CF(0) has three main subunits: a, b and c.

The protein localises to the cell membrane. Produces ATP from ADP in the presence of a proton gradient across the membrane. The gamma chain is believed to be important in regulating ATPase activity and the flow of protons through the CF(0) complex. This is ATP synthase gamma chain from Mycoplasma capricolum subsp. capricolum (strain California kid / ATCC 27343 / NCTC 10154).